Consider the following 237-residue polypeptide: Myb-related protein MYBAS1 (237 aa).

HTH myb-type domains are found at residues 5–57 (REEM…VNYL) and 58–112 (HPGL…RKKA). Positions 33–57 (WDFVAKVSGLNRTGKSCRLRWVNYL) form a DNA-binding region, H-T-H motif. Residues 62-65 (KHGR) carry the Bipartite nuclear localization signal 1 motif. Residues 85–108 (WSRIARRLPGRTDNEIKNYWRTHM) constitute a DNA-binding region (H-T-H motif). The Bipartite nuclear localization signal 2 motif lies at 109-117 (RKKAQERRG).

Its subcellular location is the nucleus. Its function is as follows. Transcription factor. In Oryza sativa subsp. japonica (Rice), this protein is Myb-related protein MYBAS1 (MYBAS1).